Here is a 483-residue protein sequence, read N- to C-terminus: Arginine/agmatine antiporter (483 aa).

12 helical membrane passes run 11-33 (ILGTLALTGIVISYMIGGGIFSL), 48-70 (LAWMLSGIGIFFIANTFKTLSII), 90-112 (VGFTIAWGYWLCQIFGNVGYAVI), 127-149 (GGNTIPAILLGSLLIWIFNYIVL), 156-178 (SFVNIIGVVCTLIPLLLFILITA), 209-228 (TMLVTLWAFIGIEGAVVISG), 241-263 (ILGFSGCLLIYVLLSLLPFGSLF), 293-315 (TGLLIAVLTSWLSWTILASEIPY), 335-357 (APSFSLFMTSGLMQITMLLVYFS), 367-389 (ITGVMVLPAYLTSSLFLVKFSLS), 415-435 (LWLIYAGGLQHLFMVAILLAL), and 458-477 (EILKMTIMALAALLAIFLFS).

Belongs to the amino acid-polyamine-organocation (APC) superfamily. Basic amino acid/polyamine antiporter (APA) (TC 2.A.3.2) family.

It localises to the cell inner membrane. Functionally, catalyzes the exchange of L-arginine for agmatine. The arginine uptake by the bacterium in the macrophage may be a virulence factor against the host innate immune response. The polypeptide is Arginine/agmatine antiporter (aaxC) (Chlamydia trachomatis serovar L2 (strain ATCC VR-902B / DSM 19102 / 434/Bu)).